A 379-amino-acid chain; its full sequence is Class V chitinase CHIT5b (379 aa).

The first 26 residues, M1–T26, serve as a signal peptide directing secretion. The region spanning R34–V379 is the GH18 domain. N-linked (GlcNAc...) asparagine glycans are attached at residues N68, N109, and N128. The active-site Proton donor is E147. N-linked (GlcNAc...) asparagine glycans are attached at residues N192, N227, and N241.

This sequence belongs to the glycosyl hydrolase 18 family. Chitinase class V subfamily.

The catalysed reaction is Random endo-hydrolysis of N-acetyl-beta-D-glucosaminide (1-&gt;4)-beta-linkages in chitin and chitodextrins.. The protein operates within glycan degradation; chitin degradation. In terms of biological role, possesses chitinase activity in vitro toward glycol chitin, carboxymethyl-chitin, colloidal chitin, and the chitin oligosaccharides (N-acetylglucosamine) (GlcNAc)6 and (GlcNAc)5. Hydrolyzes (GlcNAc)6 into (GlcNAc)4 and (GlcNAc)2, or two (GlcNAc)3 molecules. Has the capacity to reduce hyphal growth of the fungus Trichoderma viride in an agar-plate bioassay. The polypeptide is Class V chitinase CHIT5b (Medicago truncatula (Barrel medic)).